The following is a 359-amino-acid chain: MSVADSSAADSVAAPDTADTSSSVGVFSPPGYYDALAQQVLDGTPITREQALAMLEASDLDVPAIISAGYRIRHQYFGNTVQLYFLMNAKSGLCPEDCHYCSQSKVSDAPVPKYNILKRDALMDAAKVAAERGAKTYCLVISARGPNEREMKAVEEIVPEIKQKYNLDICACLGLLDESQAARLKACGVDRVNHNLNSSESHYEKICTTHTYEDRVQTLRHVRDAGMEMCSGGIIGMGESKSDIVSMAFDLNELGVQSIPVNILNAIDGTPLEGTAALTPQDALKALAMFRFVNPDRELRIAGGRELHLRQLQPMGLYVANSVFVGDYLTTQGQAPQADYDMIRDLGFDVTGSCEEMSI.

The interval 1–23 (MSVADSSAADSVAAPDTADTSSS) is disordered. In terms of domain architecture, Radical SAM core spans 76 to 302 (YFGNTVQLYF…VNPDRELRIA (227 aa)). The [4Fe-4S] cluster site is built by Cys-94, Cys-98, and Cys-101. Residues Cys-138, Cys-170, Cys-230, and Arg-300 each contribute to the [2Fe-2S] cluster site.

This sequence belongs to the radical SAM superfamily. Biotin synthase family. Homodimer. Requires [4Fe-4S] cluster as cofactor. [2Fe-2S] cluster is required as a cofactor.

The enzyme catalyses (4R,5S)-dethiobiotin + (sulfur carrier)-SH + 2 reduced [2Fe-2S]-[ferredoxin] + 2 S-adenosyl-L-methionine = (sulfur carrier)-H + biotin + 2 5'-deoxyadenosine + 2 L-methionine + 2 oxidized [2Fe-2S]-[ferredoxin]. The protein operates within cofactor biosynthesis; biotin biosynthesis; biotin from 7,8-diaminononanoate: step 2/2. Functionally, catalyzes the conversion of dethiobiotin (DTB) to biotin by the insertion of a sulfur atom into dethiobiotin via a radical-based mechanism. The polypeptide is Biotin synthase (Rhodopirellula baltica (strain DSM 10527 / NCIMB 13988 / SH1)).